A 169-amino-acid polypeptide reads, in one-letter code: Putative phosphoesterase BLi01284/BL02661 (169 aa).

His-34 acts as the Proton donor in catalysis. Short sequence motifs (HXTX) lie at residues 34–37 and 115–118; these read HLTL and HVTV. The active-site Proton acceptor is His-115.

The protein belongs to the 2H phosphoesterase superfamily. YjcG family.

This chain is Putative phosphoesterase BLi01284/BL02661, found in Bacillus licheniformis (strain ATCC 14580 / DSM 13 / JCM 2505 / CCUG 7422 / NBRC 12200 / NCIMB 9375 / NCTC 10341 / NRRL NRS-1264 / Gibson 46).